The sequence spans 230 residues: Porin OmpL (230 aa).

Positions 1–20 are cleaved as a signal peptide; the sequence is MKKINAIILLSSLTSASVFA.

The protein belongs to the oligogalacturonate-specific porin KdgM (TC 1.B.35) family. OmpL subfamily.

The protein localises to the cell outer membrane. In terms of biological role, outer membrane channel protein that allows an efficient diffusion of low-molecular-weight solutes such as small sugars and tetraglycine. However, the specific substrate recognized by the OmpL channel is unknown. The polypeptide is Porin OmpL (ompL) (Escherichia coli (strain K12)).